We begin with the raw amino-acid sequence, 347 residues long: NADH-ubiquinone oxidoreductase chain 2 (347 aa).

10 consecutive transmembrane segments (helical) span residues 3–23, 25–45, 60–80, 96–116, 149–169, 178–198, 200–220, 237–257, 274–294, and 323–343; these read PPIL…VLTS, HWLT…PILM, LLTQ…NLMF, AMVT…FWVP, IDPN…GWGG, ILAY…LYNP, MMLL…MLFM, APLI…LPPL, EMII…YFYM, and MILL…TPLL.

Belongs to the complex I subunit 2 family. As to quaternary structure, core subunit of respiratory chain NADH dehydrogenase (Complex I) which is composed of 45 different subunits. Interacts with TMEM242.

The protein localises to the mitochondrion inner membrane. It carries out the reaction a ubiquinone + NADH + 5 H(+)(in) = a ubiquinol + NAD(+) + 4 H(+)(out). In terms of biological role, core subunit of the mitochondrial membrane respiratory chain NADH dehydrogenase (Complex I) which catalyzes electron transfer from NADH through the respiratory chain, using ubiquinone as an electron acceptor. Essential for the catalytic activity and assembly of complex I. This is NADH-ubiquinone oxidoreductase chain 2 from Mungos mungo (Banded mongoose).